Here is a 597-residue protein sequence, read N- to C-terminus: Cytosolic Fe-S cluster assembly factor nar1 (597 aa).

Residues cysteine 20, cysteine 62, cysteine 65, cysteine 68, cysteine 216, and cysteine 271 each coordinate [4Fe-4S] cluster. Residues 428-449 (RASRLPGGNRRLPVGRGAASGS) are disordered. 2 residues coordinate [4Fe-4S] cluster: cysteine 462 and cysteine 466. The interval 479-505 (REASSSVQSSTSAEVPDSSSKPTPHEQ) is disordered.

This sequence belongs to the NARF family.

Functionally, component of the cytosolic Fe/S protein assembly machinery. Required for maturation of extramitochondrial Fe/S proteins. May play a role in the transfer of pre-assembled Fe/S clusters to target apoproteins. This Aspergillus niger (strain ATCC MYA-4892 / CBS 513.88 / FGSC A1513) protein is Cytosolic Fe-S cluster assembly factor nar1 (nar1).